The chain runs to 107 residues: Proteinase inhibitor I-A (107 aa).

Positions 1 to 22 (MVKFAHVVAFLLLASLIQPLTA) are cleaved as a signal peptide. The propeptide occupies 23-36 (RDLEINVLQLDVSQ).

This sequence belongs to the protease inhibitor I13 (potato type I serine protease inhibitor) family.

It is found in the secreted. This chain is Proteinase inhibitor I-A (TIMPB), found in Nicotiana tabacum (Common tobacco).